A 254-amino-acid polypeptide reads, in one-letter code: MIIVISPAKSQNFEPIKTDYQFTQPIFKQQIIKLINTLKHYEVEEIEKLMKISPKLAEEVFAKHNSFNPNKYDNSNAKAAIFTFSGDVYKGLEADTLDNKTIEYAQNHLLMLSGLYGLVRPLDLIQAYRLEMGTNIKIDGKILHKYWQDKITTQLNEYFSQQQNKILINLASNEYSQAIDKKSLAAKWLDIDFKENKAGAYKTIGIHAKKARGLMTRYILENRIENVSDIKKFNVAGYQFNPDFSDENLLCFTR.

Belongs to the UPF0246 family.

The polypeptide is UPF0246 protein FTN_1542 (Francisella tularensis subsp. novicida (strain U112)).